The sequence spans 452 residues: Neuromedin-K receptor (452 aa).

At 1-71 the chain is on the extracellular side; sequence MASVPTGENW…TNQFVQPSWR (71 aa). N-linked (GlcNAc...) asparagine glycans are attached at residues Asn9, Asn23, Asn40, and Asn60. A helical membrane pass occupies residues 72–94; the sequence is IALWSLAYGLVVAVAVFGNLIVI. Over 95-104 the chain is Cytoplasmic; sequence WIILAHKRMR. A helical transmembrane segment spans residues 105–126; it reads TVTNYFLVNLAFSDASVAAFNT. At 127-146 the chain is on the extracellular side; it reads LVNFIYGVHSEWYFGANYCR. The cysteines at positions 145 and 220 are disulfide-linked. A helical transmembrane segment spans residues 147–168; the sequence is FQNFFPITAVFASIYSMTAIAV. The Cytoplasmic segment spans residues 169–188; the sequence is DRYMAIIDPLKPRLSATATK. A helical transmembrane segment spans residues 189 to 209; the sequence is IVIGSIWILAFLLAFPQCLYS. The Extracellular segment spans residues 210–232; sequence KIKVMPGRTLCYVQWPEGPKQHF. The helical transmembrane segment at 233–257 threads the bilayer; sequence TYHIIVIILVYCFPLLIMGVTYTIV. Topologically, residues 258-286 are cytoplasmic; that stretch reads GITLWGGEIPGDTCDKYHEQLKAKRKVVK. A helical transmembrane segment spans residues 287–308; it reads MMIIVVVTFAICWLPYHVYFIL. The Extracellular portion of the chain corresponds to 309 to 321; sequence TAIYQQLNRWKYI. A helical membrane pass occupies residues 322 to 346; that stretch reads QQVYLASFWLAMSSTMYNPIIYCCL. At 347–452 the chain is on the cytoplasmic side; the sequence is NKRFRAGFKR…SPYTSVDEYS (106 aa). Cys361 is lipidated: S-palmitoyl cysteine. Positions 401-452 are disordered; sequence DPSEGDPAKSSRKKRAVPRDPSANGCSHREFKSASTTSSFISSPYTSVDEYS. A compositionally biased stretch (low complexity) spans 433 to 452; it reads SASTTSSFISSPYTSVDEYS.

Belongs to the G-protein coupled receptor 1 family. The anchoring of this receptor to the plasma membrane is probably mediated by the palmitoylation of a cysteine residue.

It is found in the cell membrane. Its function is as follows. This is a receptor for the tachykinin neuropeptide neuromedin-K (neurokinin B). It is associated with G proteins that activate a phosphatidylinositol-calcium second messenger system. This chain is Neuromedin-K receptor (Tacr3), found in Mus musculus (Mouse).